Consider the following 84-residue polypeptide: Small ribosomal subunit protein bS20 (84 aa).

The tract at residues 1–28 is disordered; that stretch reads MPNIKSAIKRVKTAETRNSRNASQRSAM.

This sequence belongs to the bacterial ribosomal protein bS20 family.

In terms of biological role, binds directly to 16S ribosomal RNA. The protein is Small ribosomal subunit protein bS20 of Listeria monocytogenes serotype 4b (strain CLIP80459).